A 291-amino-acid polypeptide reads, in one-letter code: 3-hydroxy-5-phosphonooxypentane-2,4-dione thiolase (291 aa).

Lys203 serves as the catalytic Schiff-base intermediate with substrate.

It belongs to the DeoC/FbaB aldolase family. As to quaternary structure, homodecamer.

The protein localises to the cytoplasm. The catalysed reaction is dihydroxyacetone phosphate + acetyl-CoA = 3-hydroxy-2,4-dioxopentyl phosphate + CoA. In terms of biological role, involved in the degradation of phospho-AI-2, thereby terminating induction of the lsr operon and closing the AI-2 signaling cycle. Catalyzes the transfer of an acetyl moiety from 3-hydroxy-5-phosphonooxypentane-2,4-dione to CoA to form glycerone phosphate and acetyl-CoA. The protein is 3-hydroxy-5-phosphonooxypentane-2,4-dione thiolase of Yersinia pestis bv. Antiqua (strain Antiqua).